Here is a 631-residue protein sequence, read N- to C-terminus: Dolichyl-diphosphooligosaccharide--protein glycosyltransferase subunit 2 (631 aa).

The first 22 residues, 1–22 (MALPGSSTVFLLALTIIASTQA), serve as a signal peptide directing secretion. Residues 23–540 (LTPTHYLTKH…REPEKRPPTV (518 aa)) lie on the Lumenal side of the membrane. The N-linked (GlcNAc...) asparagine glycan is linked to Asn106. Lys154 participates in a covalent cross-link: Glycyl lysine isopeptide (Lys-Gly) (interchain with G-Cter in ubiquitin). Residues 541–561 (VSNTFTALILSPLLLLFALWI) traverse the membrane as a helical segment. At 562 to 571 (RIGANVSNFT) the chain is on the cytoplasmic side. Residues 572–592 (FAPSTIVFHLGHAAMLGLMYV) traverse the membrane as a helical segment. Residues 593-596 (YWTQ) are Lumenal-facing. The helical transmembrane segment at 597–617 (LNMFQTLKYLAILGSVTFLAG) threads the bilayer. The Cytoplasmic portion of the chain corresponds to 618–631 (NRMLAQQAIKRTAH).

The protein belongs to the SWP1 family. Component of the oligosaccharyltransferase (OST) complex. OST exists in two different complex forms which contain common core subunits RPN1, RPN2, OST48, OST4, DAD1 and TMEM258, either STT3A or STT3B as catalytic subunits, and form-specific accessory subunits. STT3A complex assembly occurs through the formation of 3 subcomplexes. Subcomplex 1 contains RPN1 and TMEM258, subcomplex 2 contains the STT3A-specific subunits STT3A, DC2/OSTC, and KCP2 as well as the core subunit OST4, and subcomplex 3 contains RPN2, DAD1, and OST48. The STT3A complex can form stable complexes with the Sec61 complex or with both the Sec61 and TRAP complexes. Interacts with DDI2. Interacts with TMEM35A/NACHO.

It localises to the endoplasmic reticulum. The protein resides in the endoplasmic reticulum membrane. Its pathway is protein modification; protein glycosylation. Its function is as follows. Subunit of the oligosaccharyl transferase (OST) complex that catalyzes the initial transfer of a defined glycan (Glc(3)Man(9)GlcNAc(2) in eukaryotes) from the lipid carrier dolichol-pyrophosphate to an asparagine residue within an Asn-X-Ser/Thr consensus motif in nascent polypeptide chains, the first step in protein N-glycosylation. N-glycosylation occurs cotranslationally and the complex associates with the Sec61 complex at the channel-forming translocon complex that mediates protein translocation across the endoplasmic reticulum (ER). All subunits are required for a maximal enzyme activity. The polypeptide is Dolichyl-diphosphooligosaccharide--protein glycosyltransferase subunit 2 (Bos taurus (Bovine)).